A 520-amino-acid chain; its full sequence is MFCTRGLVFFAFPAGLDIEFTGLRSNLSGPQQISLFDLPSEWYLKTRQSVQQFTICQIGLSVFSAIEGEANKYTAHSCNFYLFPTTFGILDSEFSFQASSVQFLNQYGFNYNKFLKNGIPYMNEEQEKKIRHDILTGNWRVRSSPDKDQIKVVIDEVTRWLDLAKEGDWMTLPGITGFQAFEVQLVLRQALPNIWTVLKDEGVVVKKVSKQHRWYLQNTSCDRESCWKENILLSARGFSAFFQMLVKAQKPLVGHNMMMDLLHLHEKFFRPLPESYDQFKQNIHSLFPVLIDTKSVTKDIWKEMNFPRVSNLSKVYEVLNSDLNPTKNSGPEIVHASRCEKYVETKCPHEAAYDAFLCGSVLLKVAHLLLQKVHRIDPVPESSFPQYLDVLAPYVNQVNLIRAGVPKINFSGPDYPGIRPPILILSVKRWPGVSEQQVCHKFQNLCKFDVRRLTRSQFLLLTNKFKDARNILKEYRGHPTLCISLYRYWRHSPNVNCLLQVCGIVTAWALLAFTLGRSGP.

The Mg(2+) site is built by aspartate 17, glutamate 19, aspartate 260, and aspartate 354. A helical membrane pass occupies residues 497–513; that stretch reads CLLQVCGIVTAWALLAF.

This sequence belongs to the CAF1 family. Mg(2+) is required as a cofactor.

The protein localises to the endoplasmic reticulum membrane. It carries out the reaction Exonucleolytic cleavage of poly(A) to 5'-AMP.. Its function is as follows. 3'-exoribonuclease that has a preference for poly(A) tails of mRNAs, thereby efficiently degrading poly(A) tails. Exonucleolytic degradation of the poly(A) tail is often the first step in the decay of eukaryotic mRNAs and is also used to silence certain maternal mRNAs translationally during oocyte maturation and early embryonic development. May act as a regulator of multipotency in embryonic stem cells. Is a critical factor for proper spermatogenesis, involved in pre-piRNAs processing to generate mature piRNAs. The protein is Poly(A)-specific ribonuclease PNLDC1 of Pongo abelii (Sumatran orangutan).